The sequence spans 447 residues: Protein CLT1, chloroplastic (447 aa).

The transit peptide at 1-48 (MATTSSDRLIAGLTASIGSIESRYANPAQSVSLICRNQINGAPPIVLR) directs the protein to the chloroplast. The next 10 helical transmembrane spans lie at 103–123 (MEIV…RVLY), 135–155 (FFLA…ILYF), 172–192 (LPFL…MAAA), 200–220 (TTVL…IFLG), 228–248 (ILGC…GSGA), 256–276 (GILW…DTVM), 304–324 (IFQV…WGIP), 351–371 (GAPL…ISLL), 387–407 (TVSV…LGVA), and 413–433 (GFVA…WTPS).

It belongs to the CRT-like transporter family.

It localises to the plastid. Its subcellular location is the chloroplast membrane. Functionally, involved in thiol transport from the plastid to the cytosol. Transports probably both glutathione (GSH) and its precursor, gamma-glutamylcysteine (gamma-EC). Exhibits some functional redundancy with CLT3 in maintaining the root GSH pool. This chain is Protein CLT1, chloroplastic, found in Arabidopsis thaliana (Mouse-ear cress).